Consider the following 320-residue polypeptide: Methionyl-tRNA formyltransferase (320 aa).

111–114 is a (6S)-5,6,7,8-tetrahydrofolate binding site; it reads SLLP.

This sequence belongs to the Fmt family.

The enzyme catalyses L-methionyl-tRNA(fMet) + (6R)-10-formyltetrahydrofolate = N-formyl-L-methionyl-tRNA(fMet) + (6S)-5,6,7,8-tetrahydrofolate + H(+). Functionally, attaches a formyl group to the free amino group of methionyl-tRNA(fMet). The formyl group appears to play a dual role in the initiator identity of N-formylmethionyl-tRNA by promoting its recognition by IF2 and preventing the misappropriation of this tRNA by the elongation apparatus. The polypeptide is Methionyl-tRNA formyltransferase (Methylacidiphilum infernorum (isolate V4) (Methylokorus infernorum (strain V4))).